The sequence spans 565 residues: Liver carboxylesterase 1 (565 aa).

The signal sequence occupies residues 1-18; that stretch reads MWLCALSLISLTACLSLG. Cysteine 87 and cysteine 116 are oxidised to a cystine. Serine 221 acts as the Acyl-ester intermediate in catalysis. Cysteine 273 and cysteine 284 are oxidised to a cystine. Glutamate 353 serves as the catalytic Charge relay system. The residue at position 378 (serine 378) is a Phosphoserine. The N-linked (GlcNAc...) asparagine glycan is linked to asparagine 388. Histidine 466 (charge relay system) is an active-site residue. N-linked (GlcNAc...) asparagine glycosylation occurs at asparagine 489.

This sequence belongs to the type-B carboxylesterase/lipase family. Homotrimer and homohexamer. Binds to beta-glucuronidase. As to expression, detected in kidney, liver and lung.

Its subcellular location is the endoplasmic reticulum lumen. It is found in the cytoplasm. The protein localises to the lipid droplet. The catalysed reaction is a carboxylic ester + H2O = an alcohol + a carboxylate + H(+). It carries out the reaction cholesteryl (9Z-octadecenoate) + H2O = cholesterol + (9Z)-octadecenoate + H(+). The enzyme catalyses 2-(5Z,8Z,11Z,14Z-eicosatetraenoyl)-glycerol + H2O = glycerol + (5Z,8Z,11Z,14Z)-eicosatetraenoate + H(+). It catalyses the reaction prostaglandin E2 1-glyceryl ester + H2O = prostaglandin E2 + glycerol + H(+). The catalysed reaction is a cholesterol ester + H2O = cholesterol + a fatty acid + H(+). It carries out the reaction prostaglandin F2alpha 1-glyceryl ester + H2O = prostaglandin F2alpha + glycerol + H(+). Its function is as follows. Involved in the detoxification of xenobiotics and in the activation of ester and amide prodrugs. Hydrolyzes aromatic and aliphatic esters, but has no catalytic activity toward amides or a fatty acyl-CoA ester. Displays fatty acid ethyl ester synthase activity, catalyzing the ethyl esterification of oleic acid to ethyloleate. Converts monoacylglycerides to free fatty acids and glycerol. Hydrolyzes of 2-arachidonoylglycerol and prostaglandins. Hydrolyzes cellular cholesteryl esters to free cholesterols and promotes reverse cholesterol transport (RCT) by facilitating both the initial and final steps in the process. First of all, allows free cholesterol efflux from macrophages to extracellular cholesterol acceptors and secondly, releases free cholesterol from lipoprotein-delivered cholesteryl esters in the liver for bile acid synthesis or direct secretion into the bile. This chain is Liver carboxylesterase 1, found in Mus musculus (Mouse).